Here is a 219-residue protein sequence, read N- to C-terminus: Thymidylate kinase (219 aa).

7–14 (GIDGAGKS) contacts ATP.

This sequence belongs to the thymidylate kinase family.

It catalyses the reaction dTMP + ATP = dTDP + ADP. Functionally, phosphorylation of dTMP to form dTDP in both de novo and salvage pathways of dTTP synthesis. This is Thymidylate kinase from Chlorobium limicola (strain DSM 245 / NBRC 103803 / 6330).